A 421-amino-acid polypeptide reads, in one-letter code: MLTKKKWALFSLLTLCGGTIYKLPSLKDAFYIPMQEYFHLTNGQIGNAMSVNSFVTTVGFFLSIYFADKLPRRYTMSFSLIATGLLGVYLTTMPGYWGILFVWALFGVTCDMMNWPVLLKSVSRLGNSEQQGRLFGFFETGRGIVDTVVAFSALAVFTWFGSGLLGFKAGIWFYSLIVIAVGIIIFFVLNDKEEAPSVEVKKEDGASKNTSMTSVLKDKTIWLIAFNVFFVYAVYCGLTFFIPFLKNIYLLPVALVGAYGIINQYCLKMIGGPIGGMISDKILKSPSKYLCYTFIISTAALVLLIMLPHESMPVYLGMACTLGFGAIVFTQRAVFFAPIGEAKIAENKTGAAMALGSFIGYAPAMFCFSLYGYILDLNPGIIGYKIVFGIMACFAFSGAVVSVMLVKRISQRKKEMLAAEA.

Residues 1–44 (MLTKKKWALFSLLTLCGGTIYKLPSLKDAFYIPMQEYFHLTNGQ) are Periplasmic-facing. The helical transmembrane segment at 45-65 (IGNAMSVNSFVTTVGFFLSIY) threads the bilayer. The Cytoplasmic portion of the chain corresponds to 66–73 (FADKLPRR). The helical transmembrane segment at 74–91 (YTMSFSLIATGLLGVYLT) threads the bilayer. Topologically, residues 92–95 (TMPG) are periplasmic. The chain crosses the membrane as a helical span at residues 96-118 (YWGILFVWALFGVTCDMMNWPVL). Topologically, residues 119–146 (LKSVSRLGNSEQQGRLFGFFETGRGIVD) are cytoplasmic. The helical transmembrane segment at 147–167 (TVVAFSALAVFTWFGSGLLGF) threads the bilayer. Position 168 (K168) is a topological domain, periplasmic. Residues 169–189 (AGIWFYSLIVIAVGIIIFFVL) form a helical membrane-spanning segment. Residues 190 to 220 (NDKEEAPSVEVKKEDGASKNTSMTSVLKDKT) lie on the Cytoplasmic side of the membrane. Helical transmembrane passes span 221-241 (IWLI…LTFF) and 242-262 (IPFL…YGII). Over 263-288 (NQYCLKMIGGPIGGMISDKILKSPSK) the chain is Cytoplasmic. 2 helical membrane passes run 289–309 (YLCY…MLPH) and 310–330 (ESMP…IVFT). The Cytoplasmic segment spans residues 331–354 (QRAVFFAPIGEAKIAENKTGAAMA). The helical transmembrane segment at 355 to 375 (LGSFIGYAPAMFCFSLYGYIL) threads the bilayer. The Periplasmic portion of the chain corresponds to 376 to 385 (DLNPGIIGYK). Residues 386–406 (IVFGIMACFAFSGAVVSVMLV) traverse the membrane as a helical segment. Over 407–421 (KRISQRKKEMLAAEA) the chain is Cytoplasmic.

Belongs to the major facilitator superfamily.

It is found in the cell inner membrane. The polypeptide is Inner membrane protein YihN (yihN) (Escherichia coli (strain K12)).